A 313-amino-acid chain; its full sequence is Aspartate carbamoyltransferase catalytic subunit (313 aa).

2 residues coordinate carbamoyl phosphate: Arg-51 and Thr-52. Lys-80 serves as a coordination point for L-aspartate. Residues Arg-101, His-129, and Gln-132 each contribute to the carbamoyl phosphate site. L-aspartate is bound by residues Arg-162 and Arg-224. Residues Leu-263 and Pro-264 each coordinate carbamoyl phosphate.

Belongs to the aspartate/ornithine carbamoyltransferase superfamily. ATCase family. As to quaternary structure, heterododecamer (2C3:3R2) of six catalytic PyrB chains organized as two trimers (C3), and six regulatory PyrI chains organized as three dimers (R2).

The catalysed reaction is carbamoyl phosphate + L-aspartate = N-carbamoyl-L-aspartate + phosphate + H(+). The protein operates within pyrimidine metabolism; UMP biosynthesis via de novo pathway; (S)-dihydroorotate from bicarbonate: step 2/3. Catalyzes the condensation of carbamoyl phosphate and aspartate to form carbamoyl aspartate and inorganic phosphate, the committed step in the de novo pyrimidine nucleotide biosynthesis pathway. In Bacteroides thetaiotaomicron (strain ATCC 29148 / DSM 2079 / JCM 5827 / CCUG 10774 / NCTC 10582 / VPI-5482 / E50), this protein is Aspartate carbamoyltransferase catalytic subunit.